Consider the following 505-residue polypeptide: Probable bifunctional methylthioribulose-1-phosphate dehydratase/enolase-phosphatase E1 (505 aa).

A methylthioribulose-1-phosphate dehydratase region spans residues 1-237; sequence MGLDKDGISN…ALKLHQLGLD (237 aa). Cys-109 contacts substrate. 2 residues coordinate Zn(2+): His-127 and His-129. Glu-152 serves as the catalytic Proton donor/acceptor; for methylthioribulose-1-phosphate dehydratase activity. His-202 lines the Zn(2+) pocket. The enolase-phosphatase E1 stretch occupies residues 266–505; it reads FVLDIEGTTT…FRTAKSLLEL (240 aa). Mg(2+) contacts are provided by Asp-269 and Glu-271. Residues 404-405 and Lys-438 contribute to the substrate site; that span reads SS. Residue Asp-464 coordinates Mg(2+).

This sequence in the N-terminal section; belongs to the aldolase class II family. MtnB subfamily. In the C-terminal section; belongs to the HAD-like hydrolase superfamily. MasA/MtnC family. It depends on Zn(2+) as a cofactor. Mg(2+) serves as cofactor.

The catalysed reaction is 5-(methylsulfanyl)-D-ribulose 1-phosphate = 5-methylsulfanyl-2,3-dioxopentyl phosphate + H2O. It carries out the reaction 5-methylsulfanyl-2,3-dioxopentyl phosphate + H2O = 1,2-dihydroxy-5-(methylsulfanyl)pent-1-en-3-one + phosphate. It participates in amino-acid biosynthesis; L-methionine biosynthesis via salvage pathway; L-methionine from S-methyl-5-thio-alpha-D-ribose 1-phosphate: step 2/6. It functions in the pathway amino-acid biosynthesis; L-methionine biosynthesis via salvage pathway; L-methionine from S-methyl-5-thio-alpha-D-ribose 1-phosphate: step 3/6. The protein operates within amino-acid biosynthesis; L-methionine biosynthesis via salvage pathway; L-methionine from S-methyl-5-thio-alpha-D-ribose 1-phosphate: step 4/6. In Physcomitrium patens (Spreading-leaved earth moss), this protein is Probable bifunctional methylthioribulose-1-phosphate dehydratase/enolase-phosphatase E1.